The sequence spans 547 residues: Delta-guaiene synthase 3 (547 aa).

Mg(2+)-binding residues include Asp-299, Asp-303, and Asp-444. Positions 299-303 (DDTYD) match the DDXXD motif motif.

The protein belongs to the terpene synthase family. Requires Mg(2+) as cofactor.

The catalysed reaction is (2E,6E)-farnesyl diphosphate = delta-guaiene + diphosphate. It catalyses the reaction (2E,6E)-farnesyl diphosphate = alpha-guaiene + diphosphate. Its pathway is secondary metabolite biosynthesis; terpenoid biosynthesis. Its function is as follows. Sesquiterpene synthase involved in the biosynthesis of delta-guaiene (78.2%) and alpha-guaiene (20.9%), two structures composed of five- and seven-membered rings. Also produces 0.9% of alpha-humulene. This Aquilaria crassna (Eagle wood) protein is Delta-guaiene synthase 3 (C4).